We begin with the raw amino-acid sequence, 696 residues long: DNA topoisomerase 6 subunit B (696 aa).

The interval methionine 1–lysine 36 is disordered. A compositionally biased stretch (low complexity) spans alanine 20 to lysine 36. ATP-binding positions include asparagine 88, aspartate 187, threonine 208–lysine 209, glycine 217–lysine 224, and lysine 543.

Belongs to the TOP6B family. As to quaternary structure, homodimer. Heterotetramer of two TOP6A and two TOP6B subunits. Interacts with SPO11-2 and TOP6A3. In terms of tissue distribution, highly expressed in flowers before pollination. Expressed in roots and shoots.

The protein localises to the nucleus. The enzyme catalyses ATP-dependent breakage, passage and rejoining of double-stranded DNA.. Component of the DNA topoisomerase VI involved in chromatin organization and progression of endoreduplication cycles. Relaxes both positive and negative superturns and exhibits a strong decatenase activity. The B subunit binds ATP. May be involved in cell proliferation and stress tolerance. In Oryza sativa subsp. indica (Rice), this protein is DNA topoisomerase 6 subunit B.